The primary structure comprises 396 residues: S-adenosylmethionine synthase (396 aa).

Histidine 16 is a binding site for ATP. Aspartate 18 is a binding site for Mg(2+). A K(+)-binding site is contributed by glutamate 44. L-methionine is bound by residues glutamate 57 and glutamine 100. The segment at 100-110 is flexible loop; the sequence is QSPDINQGVDR. ATP is bound by residues 165–167, aspartate 240, 246–247, alanine 263, and lysine 267; these read DAK and RK. Residue aspartate 240 participates in L-methionine binding. Lysine 271 is an L-methionine binding site.

It belongs to the AdoMet synthase family. Homotetramer; dimer of dimers. Requires Mg(2+) as cofactor. The cofactor is K(+).

Its subcellular location is the cytoplasm. It carries out the reaction L-methionine + ATP + H2O = S-adenosyl-L-methionine + phosphate + diphosphate. It participates in amino-acid biosynthesis; S-adenosyl-L-methionine biosynthesis; S-adenosyl-L-methionine from L-methionine: step 1/1. Catalyzes the formation of S-adenosylmethionine (AdoMet) from methionine and ATP. The overall synthetic reaction is composed of two sequential steps, AdoMet formation and the subsequent tripolyphosphate hydrolysis which occurs prior to release of AdoMet from the enzyme. In Pseudomonas fluorescens (strain SBW25), this protein is S-adenosylmethionine synthase.